The chain runs to 116 residues: uncharacterized protein (116 aa).

The tract at residues 76–116 (VPPPRYSYIRSESSRNNLRNSARNQPQNLVSEQDSDSNREN) is disordered. Low complexity predominate over residues 85–99 (RSESSRNNLRNSARN).

This is an uncharacterized protein from Glycine max (Soybean).